Reading from the N-terminus, the 468-residue chain is Zinc finger CCCH domain-containing protein 32 (468 aa).

The segment at Met-1 to Asp-25 is disordered. C3H1-type zinc fingers lie at residues Arg-45 to Asp-73, Arg-90 to Asn-118, Arg-136 to Pro-164, Arg-289 to Asp-317, and Arg-335 to Gly-363.

Its subcellular location is the nucleus. The polypeptide is Zinc finger CCCH domain-containing protein 32 (Arabidopsis thaliana (Mouse-ear cress)).